We begin with the raw amino-acid sequence, 250 residues long: DNA repair protein RecO (250 aa).

Belongs to the RecO family.

Its function is as follows. Involved in DNA repair and RecF pathway recombination. The sequence is that of DNA repair protein RecO from Staphylococcus haemolyticus (strain JCSC1435).